The primary structure comprises 569 residues: Urease subunit alpha (569 aa).

The Urease domain maps to 131 to 569 (GGIDAHIHWI…LPLAQRYFLF (439 aa)). Ni(2+) is bound by residues H136, H138, and K219. N6-carboxylysine is present on K219. H221 contacts substrate. H248 and H274 together coordinate Ni(2+). H322 (proton donor) is an active-site residue. Residue D362 participates in Ni(2+) binding.

This sequence belongs to the metallo-dependent hydrolases superfamily. Urease alpha subunit family. Heterotrimer of UreA (gamma), UreB (beta) and UreC (alpha) subunits. Three heterotrimers associate to form the active enzyme. Ni cation is required as a cofactor. Carboxylation allows a single lysine to coordinate two nickel ions.

Its subcellular location is the cytoplasm. The catalysed reaction is urea + 2 H2O + H(+) = hydrogencarbonate + 2 NH4(+). It participates in nitrogen metabolism; urea degradation; CO(2) and NH(3) from urea (urease route): step 1/1. This is Urease subunit alpha from Magnetococcus marinus (strain ATCC BAA-1437 / JCM 17883 / MC-1).